The following is a 479-amino-acid chain: Cyclin-dependent kinase F-1 (479 aa).

Residues 24-419 enclose the Protein kinase domain; that stretch reads YEVLGRAGSG…AADLLNDPYF (396 aa). ATP contacts are provided by residues 30 to 38 and K53; that span reads AGSGAYADV. D146 serves as the catalytic Proton acceptor. At T291 the chain carries Phosphothreonine. Residues 429–479 form a disordered region; the sequence is EGLQVPESKDEDDDSTEEWANFRGGDSDSDFDEFGSMDVTKTDKGFSIRFS. Over residues 468 to 479 the composition is skewed to basic and acidic residues; the sequence is TKTDKGFSIRFS.

Belongs to the protein kinase superfamily. CMGC Ser/Thr protein kinase family. CDC2/CDKX subfamily.

It catalyses the reaction L-seryl-[protein] + ATP = O-phospho-L-seryl-[protein] + ADP + H(+). The enzyme catalyses L-threonyl-[protein] + ATP = O-phospho-L-threonyl-[protein] + ADP + H(+). The catalysed reaction is [DNA-directed RNA polymerase] + ATP = phospho-[DNA-directed RNA polymerase] + ADP + H(+). The protein is Cyclin-dependent kinase F-1 (CDKF-1) of Oryza sativa subsp. japonica (Rice).